The chain runs to 417 residues: RH-like protein IIR (417 aa).

11 consecutive transmembrane segments (helical) span residues 12–32 (CLPL…YFFT), 44–64 (LVAS…GFGF), 77–97 (VAFS…LDGF), 125–145 (ISVD…MVLV), 172–192 (IYVF…KPLP), 203–223 (TIPS…WPSF), 238–258 (VFNT…GSSL), 265–285 (ISMS…GTSC), 287–307 (LIPS…ISVG), 331–351 (NFSW…VRHT), and 358–378 (MIGF…TIAL).

The protein belongs to the ammonium transporter (TC 2.A.49) family. Rh subfamily.

The protein localises to the membrane. Its function is as follows. May be part of an oligomeric complex which is likely to have a transport or channel function in the erythrocyte membrane. This Pan troglodytes (Chimpanzee) protein is RH-like protein IIR.